A 421-amino-acid polypeptide reads, in one-letter code: Mitochondrial tRNA-specific 2-thiouridylase 1 (421 aa).

Residues 10 to 17 (ALSGGVDS) and Met36 contribute to the ATP site. The interaction with target base in tRNA stretch occupies residues 96–98 (NPD). Cys101 (nucleophile) is an active-site residue. Cys101 and Cys222 are disulfide-bonded. Gly126 provides a ligand contact to ATP. The interaction with tRNA stretch occupies residues 171-173 (KDQ). Catalysis depends on Cys222, which acts as the Cysteine persulfide intermediate. Residues 334–335 (RH) form an interaction with tRNA region. Residues 395–421 (KGQRRAGMATESPSDSPEDGPGLSPLL) are disordered.

It belongs to the MnmA/TRMU family. In terms of tissue distribution, ubiquitous. Abundantly expressed in tissues with high metabolic rates including heart, liver, kidney, and brain.

It is found in the mitochondrion. It carries out the reaction 5-taurinomethyluridine(34) in tRNA + S-sulfanyl-L-cysteinyl-[protein] + AH2 + ATP = 5-taurinomethyl-2-thiouridine(34) in tRNA + L-cysteinyl-[protein] + A + AMP + diphosphate + H(+). In terms of biological role, catalyzes the 2-thiolation of uridine at the wobble position (U34) of mitochondrial tRNA(Lys), tRNA(Glu) and tRNA(Gln). Required for the formation of 5-taurinomethyl-2-thiouridine (tm5s2U) of mitochondrial tRNA(Lys), tRNA(Glu), and tRNA(Gln) at the wobble position. ATP is required to activate the C2 atom of the wobble base. In Homo sapiens (Human), this protein is Mitochondrial tRNA-specific 2-thiouridylase 1 (TRMU).